Reading from the N-terminus, the 899-residue chain is Protein translocase subunit SecA (899 aa).

ATP is bound by residues Gln-89, 107–111, and Asp-502; that span reads GEGKT. Zn(2+)-binding residues include Cys-882, Cys-884, Cys-893, and His-894.

The protein belongs to the SecA family. As to quaternary structure, monomer and homodimer. Part of the essential Sec protein translocation apparatus which comprises SecA, SecYEG and auxiliary proteins SecDF-YajC and YidC. Zn(2+) is required as a cofactor.

It localises to the cell inner membrane. The protein localises to the cytoplasm. It catalyses the reaction ATP + H2O + cellular proteinSide 1 = ADP + phosphate + cellular proteinSide 2.. Functionally, part of the Sec protein translocase complex. Interacts with the SecYEG preprotein conducting channel. Has a central role in coupling the hydrolysis of ATP to the transfer of proteins into and across the cell membrane, serving both as a receptor for the preprotein-SecB complex and as an ATP-driven molecular motor driving the stepwise translocation of polypeptide chains across the membrane. This Allorhizobium ampelinum (strain ATCC BAA-846 / DSM 112012 / S4) (Agrobacterium vitis (strain S4)) protein is Protein translocase subunit SecA.